Consider the following 154-residue polypeptide: Myoglobin (154 aa).

Residues 2–148 (GLSDGEWQLV…FRKDMASNYK (147 aa)) form the Globin domain. Position 4 is a phosphoserine (serine 4). Histidine 65 lines the nitrite pocket. O2 is bound at residue histidine 65. Threonine 68 bears the Phosphothreonine mark. Residue histidine 94 participates in heme b binding.

This sequence belongs to the globin family. In terms of assembly, monomeric.

The protein resides in the cytoplasm. Its subcellular location is the sarcoplasm. It catalyses the reaction Fe(III)-heme b-[protein] + nitric oxide + H2O = Fe(II)-heme b-[protein] + nitrite + 2 H(+). The catalysed reaction is H2O2 + AH2 = A + 2 H2O. Functionally, monomeric heme protein which primary function is to store oxygen and facilitate its diffusion within muscle tissues. Reversibly binds oxygen through a pentacoordinated heme iron and enables its timely and efficient release as needed during periods of heightened demand. Depending on the oxidative conditions of tissues and cells, and in addition to its ability to bind oxygen, it also has a nitrite reductase activity whereby it regulates the production of bioactive nitric oxide. Under stress conditions, like hypoxia and anoxia, it also protects cells against reactive oxygen species thanks to its pseudoperoxidase activity. The polypeptide is Myoglobin (Homo sapiens (Human)).